Here is a 361-residue protein sequence, read N- to C-terminus: Beta-hexosaminidase (361 aa).

Substrate-binding positions include Asp-69, Arg-77, Arg-144, and 174–175 (KH). The Proton donor/acceptor role is filled by His-187. The Nucleophile role is filled by Asp-258.

The protein belongs to the glycosyl hydrolase 3 family. NagZ subfamily.

The protein localises to the cytoplasm. It carries out the reaction Hydrolysis of terminal non-reducing N-acetyl-D-hexosamine residues in N-acetyl-beta-D-hexosaminides.. Its pathway is cell wall biogenesis; peptidoglycan recycling. In terms of biological role, plays a role in peptidoglycan recycling by cleaving the terminal beta-1,4-linked N-acetylglucosamine (GlcNAc) from peptide-linked peptidoglycan fragments, giving rise to free GlcNAc, anhydro-N-acetylmuramic acid and anhydro-N-acetylmuramic acid-linked peptides. This chain is Beta-hexosaminidase, found in Neisseria gonorrhoeae (strain NCCP11945).